The sequence spans 446 residues: Exodeoxyribonuclease 7 large subunit (446 aa).

It belongs to the XseA family. In terms of assembly, heterooligomer composed of large and small subunits.

The protein resides in the cytoplasm. It carries out the reaction Exonucleolytic cleavage in either 5'- to 3'- or 3'- to 5'-direction to yield nucleoside 5'-phosphates.. In terms of biological role, bidirectionally degrades single-stranded DNA into large acid-insoluble oligonucleotides, which are then degraded further into small acid-soluble oligonucleotides. This is Exodeoxyribonuclease 7 large subunit from Streptococcus equi subsp. zooepidemicus (strain MGCS10565).